The primary structure comprises 309 residues: Ribosomal RNA small subunit methyltransferase H (309 aa).

S-adenosyl-L-methionine is bound by residues 32-34, Asp-52, Phe-79, Asp-100, and Gln-107; that span reads AGH.

The protein belongs to the methyltransferase superfamily. RsmH family.

The protein localises to the cytoplasm. The catalysed reaction is cytidine(1402) in 16S rRNA + S-adenosyl-L-methionine = N(4)-methylcytidine(1402) in 16S rRNA + S-adenosyl-L-homocysteine + H(+). Its function is as follows. Specifically methylates the N4 position of cytidine in position 1402 (C1402) of 16S rRNA. This chain is Ribosomal RNA small subunit methyltransferase H, found in Mycoplasma capricolum subsp. capricolum (strain California kid / ATCC 27343 / NCTC 10154).